The following is a 522-amino-acid chain: MKTTIDMQVLYVTCTVLAALILGYIQAMIIYRLWFHPLSKYPGPWLARISNLYSAYYAWSGDLHIDMWRCHQKYGDFVRYAPNRLLVNTNTGLKAIYGFNKHVQKSTTYNVMVHRAPSSLTMTDPQESAQRRRIVGQGFSSTAINQYESIIMEHVQRLATQLVRRGSDRGSGWSAAQNMSDWGNHFSFDVISDIVFGARHETIGKPDNRYVLGCIDGANIRTSVLFQAAELTFGRVDRYLFPKSIESRNRFTPFVSSLVRTRLQSHDASRNDAFSLLVRAKDPETSEGLSMDAIGGECTTLVMAGSDITSTVIASTLFYLSTHTESYDRVKSELQQAFPTADDVRLGHRLNSCRYLRACIEESLRLSPPVGGAPWRRVVSDGLLVDGQSIPAGCDVGTSVYALHHNSAYFKAPFVFRPSRWLTDSGAQGRESRDIRLAQSAFAPFSIGPRSCLGKGMAYAELTLVLATLLSKYDMRAAEGPMRGIGGGRVGAPWGRHRENEFQLTGHVTSAKTGPYVEFKKS.

The helical transmembrane segment at 10-30 (LYVTCTVLAALILGYIQAMII) threads the bilayer. Residue Cys452 coordinates heme.

This sequence belongs to the cytochrome P450 family. Heme serves as cofactor.

The protein resides in the membrane. It participates in mycotoxin biosynthesis. Functionally, cytochrome P450 monooxygenase; part of the gene clusters that mediate the biosynthesis of the host-selective toxins (HSTs) AK-toxins responsible for Japanese pear black spot disease by the Japanese pear pathotype. AK-toxins are esters of 9,10-epoxy 8-hydroxy 9-methyldecatrienoic acid (EDA). On cellular level, AK-toxins affect plasma membrane of susceptible cells and cause a sudden increase in loss of K(+) after a few minutes of toxin treatment. The acyl-CoA ligase AKT1, the hydrolase AKT2 and enoyl-CoA hydratase AKT3 are all involved in the biosynthesis of the AK-, AF- and ACT-toxin common 9,10-epoxy-8-hydroxy-9-methyl-decatrienoic acid (EDA) structural moiety. Part of the EDA biosynthesis occurs in the peroxisome since these 3 enzymes are localized in peroxisomes. The exact roles of the 3 enzymes, as well as of additional AK-toxin clusters enzymes, including AKT4, AKT6 and AKTS1, have still to be elucidated. The Cytochrome P450 monooxygenase AKT7 on the other side functions to limit production of EDA and AK-toxin, probably via the catalysis of a side reaction of EDA or its precursor. In Alternaria alternata (Alternaria rot fungus), this protein is Cytochrome P450 monooxygenase AKT7.